Consider the following 86-residue polypeptide: Small ribosomal subunit protein bS20 (86 aa).

The segment covering 1–11 has biased composition (basic residues); it reads MANIKSQKKRV. The interval 1 to 20 is disordered; the sequence is MANIKSQKKRVRTNEKAHQR.

This sequence belongs to the bacterial ribosomal protein bS20 family.

Binds directly to 16S ribosomal RNA. This chain is Small ribosomal subunit protein bS20, found in Bifidobacterium animalis subsp. lactis (strain AD011).